Here is a 256-residue protein sequence, read N- to C-terminus: 4-hydroxy-tetrahydrodipicolinate reductase (256 aa).

8–13 (GATGRV) contacts NAD(+). Position 36 (K36) interacts with NADP(+). Residues 89 to 91 (GTT) and 113 to 116 (ATNM) contribute to the NAD(+) site. H145 functions as the Proton donor/acceptor in the catalytic mechanism. Residue H146 participates in (S)-2,3,4,5-tetrahydrodipicolinate binding. The active-site Proton donor is the K149. Residue 155–156 (GT) coordinates (S)-2,3,4,5-tetrahydrodipicolinate.

This sequence belongs to the DapB family.

It is found in the cytoplasm. The catalysed reaction is (S)-2,3,4,5-tetrahydrodipicolinate + NAD(+) + H2O = (2S,4S)-4-hydroxy-2,3,4,5-tetrahydrodipicolinate + NADH + H(+). The enzyme catalyses (S)-2,3,4,5-tetrahydrodipicolinate + NADP(+) + H2O = (2S,4S)-4-hydroxy-2,3,4,5-tetrahydrodipicolinate + NADPH + H(+). It functions in the pathway amino-acid biosynthesis; L-lysine biosynthesis via DAP pathway; (S)-tetrahydrodipicolinate from L-aspartate: step 4/4. Catalyzes the conversion of 4-hydroxy-tetrahydrodipicolinate (HTPA) to tetrahydrodipicolinate. In Wolinella succinogenes (strain ATCC 29543 / DSM 1740 / CCUG 13145 / JCM 31913 / LMG 7466 / NCTC 11488 / FDC 602W) (Vibrio succinogenes), this protein is 4-hydroxy-tetrahydrodipicolinate reductase.